Consider the following 802-residue polypeptide: Leucine--tRNA ligase (802 aa).

The short motif at 40–51 is the 'HIGH' region element; that stretch reads PYPSGAGLHVGH. The short motif at 576-580 is the 'KMSKS' region element; sequence KMSKS. Lysine 579 lines the ATP pocket.

It belongs to the class-I aminoacyl-tRNA synthetase family.

Its subcellular location is the cytoplasm. It carries out the reaction tRNA(Leu) + L-leucine + ATP = L-leucyl-tRNA(Leu) + AMP + diphosphate. The sequence is that of Leucine--tRNA ligase from Bacillus cytotoxicus (strain DSM 22905 / CIP 110041 / 391-98 / NVH 391-98).